A 177-amino-acid polypeptide reads, in one-letter code: Alkyl hydroperoxide reductase AhpD (177 aa).

Residue Cys133 is the Proton donor of the active site. The cysteines at positions 133 and 136 are disulfide-linked. Cys136 acts as the Cysteine sulfenic acid (-SOH) intermediate in catalysis.

This sequence belongs to the AhpD family.

The catalysed reaction is N(6)-[(R)-dihydrolipoyl]-L-lysyl-[lipoyl-carrier protein] + a hydroperoxide = N(6)-[(R)-lipoyl]-L-lysyl-[lipoyl-carrier protein] + an alcohol + H2O. In terms of biological role, antioxidant protein with alkyl hydroperoxidase activity. Required for the reduction of the AhpC active site cysteine residues and for the regeneration of the AhpC enzyme activity. The protein is Alkyl hydroperoxide reductase AhpD of Coxiella burnetii (strain CbuG_Q212) (Coxiella burnetii (strain Q212)).